A 975-amino-acid polypeptide reads, in one-letter code: Translation initiation factor IF-2 (975 aa).

Disordered stretches follow at residues 49-110 (KLSG…APKA) and 193-339 (AAAP…GRGA). The span at 63–72 (KKTAARKAAP) shows a compositional bias: basic residues. 3 stretches are compositionally biased toward low complexity: residues 73–94 (KKAA…AKTP), 193–202 (AAAPEAPAPQ), and 209–225 (VVGT…ASAP). Basic and acidic residues predominate over residues 308–318 (GADRGGRDFDK). Low complexity predominate over residues 324-336 (GPSAPAAGPAAAG). The tr-type G domain maps to 469-639 (TRPPVVTVMG…KLVAEVAELK (171 aa)). A G1 region spans residues 478–485 (GHVDHGKT). Residue 478–485 (GHVDHGKT) coordinates GTP. The segment at 503-507 (GITQH) is G2. Positions 525–528 (DTPG) are G3. GTP contacts are provided by residues 525 to 529 (DTPGH) and 579 to 582 (NKID). Residues 579–582 (NKID) are G4. The G5 stretch occupies residues 615-617 (SAL).

This sequence belongs to the TRAFAC class translation factor GTPase superfamily. Classic translation factor GTPase family. IF-2 subfamily.

The protein localises to the cytoplasm. Functionally, one of the essential components for the initiation of protein synthesis. Protects formylmethionyl-tRNA from spontaneous hydrolysis and promotes its binding to the 30S ribosomal subunits. Also involved in the hydrolysis of GTP during the formation of the 70S ribosomal complex. This chain is Translation initiation factor IF-2, found in Bdellovibrio bacteriovorus (strain ATCC 15356 / DSM 50701 / NCIMB 9529 / HD100).